The chain runs to 208 residues: Uridine kinase (208 aa).

11–18 (GGTGSGKS) provides a ligand contact to ATP.

It belongs to the uridine kinase family.

It localises to the cytoplasm. It catalyses the reaction uridine + ATP = UMP + ADP + H(+). The enzyme catalyses cytidine + ATP = CMP + ADP + H(+). The protein operates within pyrimidine metabolism; CTP biosynthesis via salvage pathway; CTP from cytidine: step 1/3. Its pathway is pyrimidine metabolism; UMP biosynthesis via salvage pathway; UMP from uridine: step 1/1. The sequence is that of Uridine kinase from Clostridium perfringens (strain SM101 / Type A).